Here is a 339-residue protein sequence, read N- to C-terminus: Dihydroorotase (339 aa).

Zn(2+) is bound by residues histidine 12 and histidine 14. Substrate is bound by residues 14–16 (HVR) and asparagine 40. Zn(2+) contacts are provided by lysine 94, histidine 133, histidine 167, and aspartate 239. At lysine 94 the chain carries N6-carboxylysine. Histidine 133 contacts substrate. Aspartate 239 is an active-site residue. Residues histidine 243 and alanine 255 each contribute to the substrate site.

It belongs to the metallo-dependent hydrolases superfamily. DHOase family. Class II DHOase subfamily. In terms of assembly, homodimer. Zn(2+) is required as a cofactor.

The catalysed reaction is (S)-dihydroorotate + H2O = N-carbamoyl-L-aspartate + H(+). The protein operates within pyrimidine metabolism; UMP biosynthesis via de novo pathway; (S)-dihydroorotate from bicarbonate: step 3/3. Catalyzes the reversible cyclization of carbamoyl aspartate to dihydroorotate. The polypeptide is Dihydroorotase (Helicobacter pylori (strain ATCC 700392 / 26695) (Campylobacter pylori)).